The chain runs to 472 residues: Protein nucleotidyltransferase YdiU (472 aa).

ATP is bound by residues G86, G88, R89, K109, D121, G122, R172, and R179. The Proton acceptor role is filled by D244. Mg(2+)-binding residues include N245 and D254. Residue D254 participates in ATP binding.

It belongs to the SELO family. Mg(2+) serves as cofactor. Requires Mn(2+) as cofactor.

It carries out the reaction L-seryl-[protein] + ATP = 3-O-(5'-adenylyl)-L-seryl-[protein] + diphosphate. The enzyme catalyses L-threonyl-[protein] + ATP = 3-O-(5'-adenylyl)-L-threonyl-[protein] + diphosphate. It catalyses the reaction L-tyrosyl-[protein] + ATP = O-(5'-adenylyl)-L-tyrosyl-[protein] + diphosphate. The catalysed reaction is L-histidyl-[protein] + UTP = N(tele)-(5'-uridylyl)-L-histidyl-[protein] + diphosphate. It carries out the reaction L-seryl-[protein] + UTP = O-(5'-uridylyl)-L-seryl-[protein] + diphosphate. The enzyme catalyses L-tyrosyl-[protein] + UTP = O-(5'-uridylyl)-L-tyrosyl-[protein] + diphosphate. Its function is as follows. Nucleotidyltransferase involved in the post-translational modification of proteins. It can catalyze the addition of adenosine monophosphate (AMP) or uridine monophosphate (UMP) to a protein, resulting in modifications known as AMPylation and UMPylation. In Ruegeria sp. (strain TM1040) (Silicibacter sp.), this protein is Protein nucleotidyltransferase YdiU.